We begin with the raw amino-acid sequence, 323 residues long: Acetyl esterase (323 aa).

The Involved in the stabilization of the negatively charged intermediate by the formation of the oxyanion hole signature appears at 91 to 93 (HGG). Catalysis depends on residues serine 165, aspartate 262, and histidine 292.

This sequence belongs to the 'GDXG' lipolytic enzyme family. As to quaternary structure, homodimer. Interacts with MalT and MelA.

It localises to the cytoplasm. In terms of biological role, displays esterase activity towards short chain fatty esters (acyl chain length of up to 8 carbons). Able to hydrolyze triacetylglycerol (triacetin) and tributyrylglycerol (tributyrin), but not trioleylglycerol (triolein) or cholesterol oleate. Negatively regulates MalT activity by antagonizing maltotriose binding. Inhibits MelA galactosidase activity. This is Acetyl esterase from Salmonella choleraesuis (strain SC-B67).